The following is a 502-amino-acid chain: Mannitol dehydrogenase 2 (502 aa).

It belongs to the mannitol dehydrogenase family.

The enzyme catalyses D-mannitol + NAD(+) = D-fructose + NADH + H(+). Catalyzes the NAD(H)-dependent interconversion of D-fructose and D-mannitol in the mannitol metabolic pathway. The protein is Mannitol dehydrogenase 2 of Saccharomyces cerevisiae (strain ATCC 204508 / S288c) (Baker's yeast).